Here is a 152-residue protein sequence, read N- to C-terminus: Glycine cleavage system H protein, mitochondrial (152 aa).

The N-terminal 31 residues, 1–31 (MALRMWASSTANALRLSSATRPHYSPLSRCF), are a transit peptide targeting the mitochondrion. Residues 53–135 (VATVGITDHA…YEDGWMIKVK (83 aa)) enclose the Lipoyl-binding domain. At lysine 94 the chain carries N6-lipoyllysine.

The protein belongs to the GcvH family. As to quaternary structure, the glycine cleavage system is composed of four proteins: P, T, L and H. Requires (R)-lipoate as cofactor.

Its subcellular location is the mitochondrion. In terms of biological role, the glycine cleavage system catalyzes the degradation of glycine. The H protein shuttles the methylamine group of glycine from the P protein to the T protein. In Flaveria pubescens (Yellowtops), this protein is Glycine cleavage system H protein, mitochondrial (GDCSH).